We begin with the raw amino-acid sequence, 85 residues long: Large ribosomal subunit protein bL27 (85 aa).

A compositionally biased stretch (polar residues) spans 1 to 13; it reads MAKTKSGGSTSNG. Positions 1–26 are disordered; sequence MAKTKSGGSTSNGRDSKGRRLGQKLG.

It belongs to the bacterial ribosomal protein bL27 family.

This Mycoplasma mobile (strain ATCC 43663 / 163K / NCTC 11711) (Mesomycoplasma mobile) protein is Large ribosomal subunit protein bL27.